The primary structure comprises 867 residues: Mitochondrial escape protein 2 (867 aa).

2 disordered regions span residues 1–20 and 44–66; these read MISA…RGPR and RTTR…KESG. Residues 1 to 41 constitute a mitochondrion transit peptide; that stretch reads MISAHILSRQATRPGHRGPRFTTHSTALLVQRSLGQGLPLA. Residues 42–308 lie on the Mitochondrial matrix side of the membrane; it reads HRRTTRAWES…IWAWFTSHPR (267 aa). The span at 48 to 59 shows a compositional bias: low complexity; it reads AWESTSSSTAST. The RRM domain occupies 203-293; sequence SRIRVEFVAA…TKLRLSYEQR (91 aa). Residues 309-329 traverse the membrane as a helical segment; that stretch reads IVIPLVAALIAAFTVAVFDPI. Residues 330–867 lie on the Mitochondrial intermembrane side of the membrane; it reads REFFVKAHVQ…GVVKGQMVKG (538 aa). Over residues 614–639 the composition is skewed to basic and acidic residues; that stretch reads FAHDGQQKDSESGDQDNDNKNQKKDS. The interval 614 to 647 is disordered; that stretch reads FAHDGQQKDSESGDQDNDNKNQKKDSNTPAPLDP. Positions 797 to 857 form a coiled coil; the sequence is LLVLTELAKM…ARLKGLEKEM (61 aa).

Belongs to the YME2 family.

It is found in the mitochondrion inner membrane. Functionally, plays a role in maintaining the mitochondrial genome and in controlling the mtDNA escape. Involved in the regulation of mtDNA nucleotide structure and number. May have a dispensable role in early maturation of pre-rRNA. In Neurospora crassa (strain ATCC 24698 / 74-OR23-1A / CBS 708.71 / DSM 1257 / FGSC 987), this protein is Mitochondrial escape protein 2 (msp-45).